The chain runs to 433 residues: GTPase Der (433 aa).

2 EngA-type G domains span residues 5-167 (KKVL…GEAN) and 174-349 (IKVG…DQLE). GTP-binding positions include 11–18 (GRPNVGKS), 58–62 (DTGGF), 119–122 (NKVD), 180–187 (GKPNSGKS), 227–231 (DTAGI), and 292–295 (SKWD). The region spanning 350-429 (FKTSTPDLNK…PILVELREKI (80 aa)) is the KH-like domain.

This sequence belongs to the TRAFAC class TrmE-Era-EngA-EngB-Septin-like GTPase superfamily. EngA (Der) GTPase family. As to quaternary structure, associates with the 50S ribosomal subunit.

In terms of biological role, GTPase that plays an essential role in the late steps of ribosome biogenesis. This is GTPase Der from Borreliella afzelii (strain PKo) (Borrelia afzelii).